The following is a 144-amino-acid chain: Putative RNase YutE (144 aa).

Arg96 is an active-site residue. Positions 96 to 103 (RKTLVQQY) match the RX(4)HXY motif motif.

This sequence belongs to the HepT RNase toxin family. In terms of assembly, homodimer, probably forms a complex with cognate antitoxin YutD.

Probable toxic component of a putative type VII toxin-antitoxin (TA) system, probably an RNase. Probably neutralized by cognate antitoxin YutD. This chain is Putative RNase YutE (yutE), found in Bacillus subtilis (strain 168).